A 164-amino-acid chain; its full sequence is 3-isopropylmalate dehydratase small subunit 1 (164 aa).

This sequence belongs to the LeuD family. LeuD type 2 subfamily. As to quaternary structure, heterodimer of LeuC and LeuD.

The catalysed reaction is (2R,3S)-3-isopropylmalate = (2S)-2-isopropylmalate. Its pathway is amino-acid biosynthesis; L-leucine biosynthesis; L-leucine from 3-methyl-2-oxobutanoate: step 2/4. Functionally, catalyzes the isomerization between 2-isopropylmalate and 3-isopropylmalate, via the formation of 2-isopropylmaleate. The sequence is that of 3-isopropylmalate dehydratase small subunit 1 (leuD1) from Pyrococcus furiosus (strain ATCC 43587 / DSM 3638 / JCM 8422 / Vc1).